The primary structure comprises 319 residues: Beta-ketoacyl-[acyl-carrier-protein] synthase III (319 aa).

Residues cysteine 113 and histidine 246 contribute to the active site. An ACP-binding region spans residues 247 to 251; sequence QANLR. Residue asparagine 276 is part of the active site.

The protein belongs to the thiolase-like superfamily. FabH family. As to quaternary structure, homodimer.

The protein resides in the cytoplasm. It catalyses the reaction malonyl-[ACP] + acetyl-CoA + H(+) = 3-oxobutanoyl-[ACP] + CO2 + CoA. The protein operates within lipid metabolism; fatty acid biosynthesis. Functionally, catalyzes the condensation reaction of fatty acid synthesis by the addition to an acyl acceptor of two carbons from malonyl-ACP. Catalyzes the first condensation reaction which initiates fatty acid synthesis and may therefore play a role in governing the total rate of fatty acid production. Possesses both acetoacetyl-ACP synthase and acetyl transacylase activities. Its substrate specificity determines the biosynthesis of branched-chain and/or straight-chain of fatty acids. In Laribacter hongkongensis (strain HLHK9), this protein is Beta-ketoacyl-[acyl-carrier-protein] synthase III.